The sequence spans 225 residues: UPF0758 protein Shewmr7_0359 (225 aa).

Positions 102–224 (VLTNPDLTRD…IVSFAERGWI (123 aa)) constitute an MPN domain. Residues histidine 173, histidine 175, and aspartate 186 each coordinate Zn(2+). The short motif at 173–186 (HNHPSGIAEPSQAD) is the JAMM motif element.

Belongs to the UPF0758 family.

The polypeptide is UPF0758 protein Shewmr7_0359 (Shewanella sp. (strain MR-7)).